A 495-amino-acid chain; its full sequence is Heterogeneous nuclear ribonucleoprotein Q (495 aa).

Over residues 1 to 10 (MSDARDNDDR) the composition is skewed to basic and acidic residues. The interval 1 to 101 (MSDARDNDDR…KPPSPIDDED (101 aa)) is disordered. Composition is skewed to acidic residues over residues 11 to 46 (VDFE…DDDV) and 67 to 101 (MEDV…DDED). 3 consecutive RRM domains span residues 116 to 194 (SEVF…LSET), 196 to 278 (NRLF…WADP), and 292 to 368 (KALY…LAKP). The interval 452–495 (MPMAAAPPQRPRRNDRNNGSSGGSGRDNSHEHDGNRGGRRYRPY) is disordered. Residues 478 to 487 (DNSHEHDGNR) show a composition bias toward basic and acidic residues.

In terms of assembly, interacts with LHP1 in the nucleus on a common set of chromatin regions. As to expression, predominantly expressed in vascular and meristematic tissues. Expressed throughout development in seedlings, roots, leaves, floral buds and siliques.

Its subcellular location is the nucleus. It localises to the cytoplasm. It is found in the microsome. Functionally, transcriptional activator that binds DNA on GAGA-like motif and 5'-(C/G)ACGTG(G/T)C(A/G)-3' consensus motif in the promoters of target genes. Component of ribonucleosomes, which are complexes of at least 20 other different heterogeneous nuclear ribonucleoproteins (hnRNP). hnRNP play an important role in processing of precursor mRNA in the nucleus. Required during flower development and for cell fate determination. Acts both as an antagonist and as a promoter of polycomb LHP1 gene regulation activity, depending of target genes, to regulate the transcription of stress-responsive and flowering genes. May regulate histone H3 trimethylation on lysine 27 (H3K27me3). Recognizes and binds histone H3 tails methylated at 'Lys-4' (H3K4me) and acetylated at 'Lys-9' (H3K9ac), leading to epigenetic activation. When in complex with LHP1, recognizes and binds histone H3 tails methylated at 'Lys-4' (H3K4me) and 'Lys-27' (H3K27me), mostly corresponding to stress-responsive genes. May function as a suppressor of cell-autonomous immune responses involving glucosinolates, salicylic acid (SA) and jasmonic acid (JA) pathways toward pathogenic bacteria and fungi. The sequence is that of Heterogeneous nuclear ribonucleoprotein Q from Arabidopsis thaliana (Mouse-ear cress).